Consider the following 376-residue polypeptide: Lysocardiolipin acyltransferase 1 (376 aa).

A helical transmembrane segment spans residues 9 to 29 (FILFLFAGSFFGSIFMLGPIL). Asn35 is a glycosylation site (N-linked (GlcNAc...) asparagine). Residues 48–68 (ATWLTLPVALLETMFGVRVVI) traverse the membrane as a helical segment. An HXXXXD motif motif is present at residues 85 to 90 (HRTRVD). An N6-acetyllysine modification is found at Lys183. Transmembrane regions (helical) follow at residues 309–329 (LLSIVYWALFCSAMCLLIYLY) and 336–356 (FIISIVFFVLQERIFGGLEII).

It belongs to the 1-acyl-sn-glycerol-3-phosphate acyltransferase family. Widely expressed with highest expression in heart, liver and 12.5 dpc aorta-gonad-mesonephros and lower levels in the 16 dpc fetal liver and adult bone marrow. In bone marrow, highest levels are found in B-cells compared with whole bone marrow, T-cells, erythrocytes, and granulocytes.

It is found in the endoplasmic reticulum membrane. The enzyme catalyses a 1-acyl-sn-glycero-3-phosphate + an acyl-CoA = a 1,2-diacyl-sn-glycero-3-phosphate + CoA. It carries out the reaction a 1-acyl-sn-glycero-3-phospho-(1D-myo-inositol) + an acyl-CoA = a 1,2-diacyl-sn-glycero-3-phospho-(1D-myo-inositol) + CoA. It catalyses the reaction 1-acyl-sn-glycero-3-phospho-(1'-sn-glycerol) + an acyl-CoA = a 1,2-diacyl-sn-glycero-3-phospho-(1'-sn-glycerol) + CoA. The catalysed reaction is 1-hexadecanoyl-sn-glycero-3-phosphate + (9Z)-octadecenoyl-CoA = 1-hexadecanoyl-2-(9Z-octadecenoyl)-sn-glycero-3-phosphate + CoA. The enzyme catalyses 1-(9Z-octadecenoyl)-sn-glycero-3-phosphate + (9Z)-octadecenoyl-CoA = 1,2-di-(9Z-octadecenoyl)-sn-glycero-3-phosphate + CoA. It carries out the reaction 1-(9Z,12Z)-octadecadienoyl-sn-glycero-3-phosphate + (9Z)-octadecenoyl-CoA = 1-(9Z,12Z)-octadecadienoyl-2-(9Z)-octadecenoyl-sn-glycero-3-phosphate + CoA. It catalyses the reaction 1-(9Z,12Z,15Z)-octadecatrienoyl-sn-glycero-3-phosphate + (9Z)-octadecenoyl-CoA = 1-(9Z,12Z,15Z)-octadecatrienoyl-2-(9Z)-octadecenoyl-sn-glycero-3-phosphate + CoA. The catalysed reaction is 1-(9Z-octadecenoyl)-sn-glycero-3-phosphate + hexadecanoyl-CoA = 1-(9Z)-octadecenoyl-2-hexadecanoyl-sn-glycero-3-phosphate + CoA. The enzyme catalyses 1-(9Z-octadecenoyl)-sn-glycero-3-phosphate + octadecanoyl-CoA = 1-(9Z-octadecenoyl)-2-octadecanoyl-sn-glycero-3-phosphate + CoA. It carries out the reaction 1-acyl-sn-glycero-3-phospho-(1'-sn-glycerol) + (9Z)-octadecenoyl-CoA = 1-acyl-2-(9Z-octadecenoyl)-sn-glycero-3-phospho-(1'-sn-glycerol) + CoA. It catalyses the reaction a 1-acyl-sn-glycero-3-phospho-(1D-myo-inositol) + (9Z)-octadecenoyl-CoA = a 1-acyl-2-(9Z-octadecenoyl)-sn-glycero-3-phospho-(1D-myo-inositol) + CoA. The catalysed reaction is 1-hexadecanoyl-sn-glycero-3-phospho-(1D-myo-inositol) + hexadecanoyl-CoA = 1,2-dihexadecanoyl-sn-glycero-3-phospho-(1D-myo-inositol) + CoA. The enzyme catalyses 1-hexadecanoyl-sn-glycero-3-phospho-(1D-myo-inositol) + octadecanoyl-CoA = 1-hexadecanoyl-2-octadecanoyl-sn-glycero-3-phospho-(1D-myo-inositol) + CoA. It carries out the reaction 1-hexadecanoyl-sn-glycero-3-phospho-(1D-myo-inositol) + (9Z)-octadecenoyl-CoA = 1-hexadecanoyl-2-(9Z-octadecenoyl)-sn-glycero-3-phospho-(1D-myo-inositol) + CoA. It catalyses the reaction 1-hexadecanoyl-sn-glycero-3-phospho-(1D-myo-inositol) + (9Z,12Z)-octadecadienoyl-CoA = 1-hexadecanoyl-2-(9Z,12Z-octadecadienoyl)-sn-glycero-3-phospho-(1D-myo-inositol) + CoA. The catalysed reaction is 1-hexadecanoyl-sn-glycero-3-phospho-(1D-myo-inositol) + (5Z,8Z,11Z,14Z)-eicosatetraenoyl-CoA = 1-hexadecanoyl-2-(5Z,8Z,11Z,14Z-eicosatetraenoyl)-sn-glycero-3-phospho-D-myo-inositol + CoA. The enzyme catalyses 1-hexadecanoyl-sn-glycero-3-phospho-(1'-sn-glycerol) + hexadecanoyl-CoA = 1,2-dihexadecanoyl-sn-glycero-3-phospho-(1'-sn-glycerol) + CoA. It carries out the reaction 1-hexadecanoyl-sn-glycero-3-phospho-(1'-sn-glycerol) + octadecanoyl-CoA = 1-hexadecanoyl-2-octadecanoyl-sn-glycero-3-phospho-(1'-sn-glycerol) + CoA. It catalyses the reaction 1-hexadecanoyl-sn-glycero-3-phospho-(1'-sn-glycerol) + (9Z)-octadecenoyl-CoA = 1-hexadecanoyl-2-(9Z-octadecenoyl)-sn-glycero-3-phospho-(1'-sn-glycerol) + CoA. The catalysed reaction is 1-hexadecanoyl-sn-glycero-3-phospho-(1'-sn-glycerol) + (9Z,12Z)-octadecadienoyl-CoA = 1-hexadecanoyl-2-(9Z,12Z-octadecadienoyl)-sn-glycero-3-phospho-(1'-sn-glycerol) + CoA. The enzyme catalyses 1-tetradecanoyl-sn-glycero-3-phospho-(1'-sn-glycerol) + (9Z)-octadecenoyl-CoA = 1-tetradecanoyl-2-(9Z-octadecenoyl)-sn-glycero-3-phospho-(1'-sn-glycerol) + CoA. It carries out the reaction 1-octadecanoyl-sn-glycero-3-phospho-(1'-sn-glycerol) + (9Z)-octadecenoyl-CoA = 1-octadecanoyl-2-(9Z-octadecenoyl)-sn-glycero-3-phospho-(1'-sn-glycerol) + CoA. It catalyses the reaction 1-(9Z-octadecenoyl)-sn-glycero-3-phospho-(1'-sn-glycerol) + (9Z)-octadecenoyl-CoA = 1,2-di-(9Z-octadecenoyl)-sn-glycero-3-phospho-(1'-sn-glycerol) + CoA. The catalysed reaction is 1-hexadecanoyl-sn-glycero-3-phospho-(1D-myo-inositol) + dodecanoyl-CoA = 1-hexadecanoyl-2-dodecanoyl-sn-glycero-3-phospho-(1D-myo-inositol) + CoA. The enzyme catalyses 1',3'-bis-[1-acyl-sn-glycero-3-phospho]-glycerol + (9Z)-octadecenoyl-CoA = 1'-[1-acyl-2-(9Z)-octadecenoyl-sn-glycero-3-phospho],3'-[1-acyl,2-hydroxy-sn-glycero-3-phospho]-glycerol + CoA. It carries out the reaction 1'-[1,2-diacyl-sn-glycero-3-phospho],3'-[1-acyl-sn-glycero-3-phospho]-glycerol + (9Z)-octadecenoyl-CoA = 1'-[1,2-diacyl-sn-glycero-3-phospho],3'-[1-acyl,2-(9Z)-octadecenoyl-sn-glycero-3-phospho]-glycerol + CoA. It catalyses the reaction 1'-[1,2-diacyl-sn-glycero-3-phospho],3'-[1-acyl-sn-glycero-3-phospho]-glycerol + (9Z,12Z)-octadecadienoyl-CoA = 1'-[1,2-diacyl-sn-glycero-3-phospho],3'-[1-acyl,2-(9Z,12Z)-octadecadienoyl-sn-glycero-3-phospho]-glycerol + CoA. The catalysed reaction is 1'-[1,2-diacyl-sn-glycero-3-phospho],3'-[1-acyl-sn-glycero-3-phospho]-glycerol + dodecanoyl-CoA = 1'-[1,2-diacyl-sn-glycero-3-phospho],3'-[1-acyl,2-dodecanoyl-sn-glycero-3-phospho]-glycerol + CoA. The enzyme catalyses 1',3'-bis-[1-acyl-sn-glycero-3-phospho]-glycerol + dodecanoyl-CoA = 1'-[1-acyl-2-dodecanoyl-sn-glycero-3-phospho],3'-[1-acyl,2-hydroxy-sn-glycero-3-phospho]-glycerol + CoA. It carries out the reaction a 1-acyl-sn-glycero-3-phosphate + (9Z)-octadecenoyl-CoA = a 1-acyl-2-(9Z-octadecenoyl)-sn-glycero-3-phosphate + CoA. It catalyses the reaction 1',3'-bis-[1-acyl-sn-glycero-3-phospho]-glycerol + (9Z,12Z)-octadecadienoyl-CoA = 1'-[1-acyl-2-(9Z,12Z)-octadecadienoyl-sn-glycero-3-phospho],3'-[1-acyl,2-hydroxy-sn-glycero-3-phospho]-glycerol + CoA. The catalysed reaction is 1',3'-bis-[1-acyl-sn-glycero-3-phospho]-glycerol + hexadecanoyl-CoA = 1'-[1-acyl-2-hexadecanoyl-sn-glycero-3-phospho],3'-[1-acyl,2-hydroxy-sn-glycero-3-phospho]-glycerol + CoA. The enzyme catalyses 1',3'-bis-[1-acyl-sn-glycero-3-phospho]-glycerol + octadecanoyl-CoA = 1'-[1-acyl-2-octadecanoyl-sn-glycero-3-phospho],3'-[1-acyl,2-hydroxy-sn-glycero-3-phospho]-glycerol + CoA. It carries out the reaction 1'-[1,2-diacyl-sn-glycero-3-phospho],3'-[1-acyl-sn-glycero-3-phospho]-glycerol + octanoyl-CoA = 1'-[1,2-diacyl-sn-glycero-3-phospho],3'-[1-acyl,2-octanoyl-sn-glycero-3-phospho]-glycerol + CoA. It catalyses the reaction 1',3'-bis-[1-acyl-sn-glycero-3-phospho]-glycerol + octanoyl-CoA = 1'-[1-acyl-2-octanoyl-sn-glycero-3-phospho],3'-[1-acyl,2-hydroxy-sn-glycero-3-phospho]-glycerol + CoA. The catalysed reaction is 1'-[1,2-diacyl-sn-glycero-3-phospho],3'-[1-acyl-sn-glycero-3-phospho]-glycerol + hexadecanoyl-CoA = 1'-[1,2-diacyl-sn-glycero-3-phospho],3'-[1-acyl,2-hexadecanoyl-sn-glycero-3-phospho]-glycerol + CoA. The enzyme catalyses 1'-[1,2-diacyl-sn-glycero-3-phospho],3'-[1-acyl-sn-glycero-3-phospho]-glycerol + (5Z,8Z,11Z,14Z)-eicosatetraenoyl-CoA = 1'-[1,2-diacyl-sn-glycero-3-phospho],3'-[1-acyl,2-(5Z,8Z,11Z,14Z)-eicosatetraenoyl-sn-glycero-3-phospho]-glycerol + CoA. It carries out the reaction 1',3'-bis-[1-acyl-sn-glycero-3-phospho]-glycerol + (5Z,8Z,11Z,14Z)-eicosatetraenoyl-CoA = 1'-[1-acyl-2-(5Z,8Z,11Z,14Z)-eicosatetraenoyl-sn-glycero-3-phospho],3'-[1-acyl,2-hydroxy-sn-glycero-3-phospho]-glycerol + CoA. It catalyses the reaction a 1-acyl-sn-glycero-3-phospho-(1D-myo-inositol) + octadecanoyl-CoA = a 1-acyl-2-octadecanoyl-sn-glycero-3-phospho-(1D-myo-inositol) + CoA. The catalysed reaction is a 2-acyl-sn-glycero-3-phospho-D-myo-inositol + octadecanoyl-CoA = 1-octadecanoyl-2-acyl-sn-glycero-3-phospho-1D-myo-inositol + CoA. The protein operates within phospholipid metabolism; CDP-diacylglycerol biosynthesis; CDP-diacylglycerol from sn-glycerol 3-phosphate: step 2/3. Functionally, exhibits acyl-CoA:lysocardiolipin acyltransferase (ALCAT) activity; catalyzes the reacylation of lyso-cardiolipin to cardiolipin (CL), a key step in CL remodeling. Recognizes both monolysocardiolipin and dilysocardiolipin as substrates with a preference for linoleoyl-CoA and oleoyl-CoA as acyl donors. Also exhibits 1-acyl-sn-glycerol-3-phosphate acyltransferase activity (AGPAT) activity; converts 1-acyl-sn-glycerol-3- phosphate (lysophosphatidic acid or LPA) into 1,2-diacyl-sn-glycerol-3- phosphate (phosphatidic acid or PA) by incorporating an acyl moiety at the sn-2 position of the glycerol backbone. Possesses lysophosphatidylinositol acyltransferase (LPIAT) activity. Possesses lysophosphatidylglycerol acyltransferase (LPGAT) activity. Required for establishment of the hematopoietic and endothelial lineages. The sequence is that of Lysocardiolipin acyltransferase 1 (Lclat1) from Mus musculus (Mouse).